Reading from the N-terminus, the 218-residue chain is Peroxiredoxin-like 2A (218 aa).

The thioredoxin fold stretch occupies residues 3–101 (MWSIGAGAIG…DELGVPLYAV (99 aa)). Catalysis depends on redox-active residues Cys74 and Cys77.

Belongs to the peroxiredoxin-like PRXL2 family. PRXL2A subfamily.

The protein resides in the cytoplasm. The protein localises to the secreted. Its function is as follows. Involved in redox regulation of the cell. Acts as an antioxidant. Inhibits TNFSF11-induced NFKB1 and JUN activation and osteoclast differentiation. May affect bone resorption and help to maintain bone mass. Acts as a negative regulator of macrophage-mediated inflammation by inhibiting macrophage production of inflammatory cytokines, probably through suppression of the MAPK signaling pathway. The sequence is that of Peroxiredoxin-like 2A (PRXL2A) from Bos taurus (Bovine).